The following is a 189-amino-acid chain: Large ribosomal subunit protein bL9 (189 aa).

The protein belongs to the bacterial ribosomal protein bL9 family.

Functionally, binds to the 23S rRNA. In Methylobacterium nodulans (strain LMG 21967 / CNCM I-2342 / ORS 2060), this protein is Large ribosomal subunit protein bL9.